The chain runs to 295 residues: Phosphatidylserine decarboxylase proenzyme (295 aa).

Catalysis depends on charge relay system; for autoendoproteolytic cleavage activity residues Asp113, His169, and Ser256. Ser256 serves as the catalytic Schiff-base intermediate with substrate; via pyruvic acid; for decarboxylase activity. At Ser256 the chain carries Pyruvic acid (Ser); by autocatalysis.

The protein belongs to the phosphatidylserine decarboxylase family. PSD-B subfamily. Prokaryotic type II sub-subfamily. In terms of assembly, heterodimer of a large membrane-associated beta subunit and a small pyruvoyl-containing alpha subunit. Pyruvate serves as cofactor. Is synthesized initially as an inactive proenzyme. Formation of the active enzyme involves a self-maturation process in which the active site pyruvoyl group is generated from an internal serine residue via an autocatalytic post-translational modification. Two non-identical subunits are generated from the proenzyme in this reaction, and the pyruvate is formed at the N-terminus of the alpha chain, which is derived from the carboxyl end of the proenzyme. The autoendoproteolytic cleavage occurs by a canonical serine protease mechanism, in which the side chain hydroxyl group of the serine supplies its oxygen atom to form the C-terminus of the beta chain, while the remainder of the serine residue undergoes an oxidative deamination to produce ammonia and the pyruvoyl prosthetic group on the alpha chain. During this reaction, the Ser that is part of the protease active site of the proenzyme becomes the pyruvoyl prosthetic group, which constitutes an essential element of the active site of the mature decarboxylase.

The protein resides in the cell membrane. It carries out the reaction a 1,2-diacyl-sn-glycero-3-phospho-L-serine + H(+) = a 1,2-diacyl-sn-glycero-3-phosphoethanolamine + CO2. The protein operates within phospholipid metabolism; phosphatidylethanolamine biosynthesis; phosphatidylethanolamine from CDP-diacylglycerol: step 2/2. Functionally, catalyzes the formation of phosphatidylethanolamine (PtdEtn) from phosphatidylserine (PtdSer). The protein is Phosphatidylserine decarboxylase proenzyme of Clostridium botulinum (strain Kyoto / Type A2).